The primary structure comprises 228 residues: Sec-independent protein translocase protein TatB (228 aa).

The chain crosses the membrane as a helical span at residues 1–21 (MFDFGLGELVFVGIIALIVLG). 2 disordered regions span residues 126-162 (LSDGISDVMPSERSDTSAEILGDSGQTGSTAEPAETD) and 196-228 (VPHTTSLRKQAISRKRGLRPKHRAKPKLRVRKS). A compositionally biased stretch (basic residues) spans 206-228 (AISRKRGLRPKHRAKPKLRVRKS).

This sequence belongs to the TatB family. As to quaternary structure, the Tat system comprises two distinct complexes: a TatABC complex, containing multiple copies of TatA, TatB and TatC subunits, and a separate TatA complex, containing only TatA subunits. Substrates initially bind to the TatABC complex, which probably triggers association of the separate TatA complex to form the active translocon.

The protein resides in the cell inner membrane. Functionally, part of the twin-arginine translocation (Tat) system that transports large folded proteins containing a characteristic twin-arginine motif in their signal peptide across membranes. Together with TatC, TatB is part of a receptor directly interacting with Tat signal peptides. TatB may form an oligomeric binding site that transiently accommodates folded Tat precursor proteins before their translocation. This is Sec-independent protein translocase protein TatB from Neisseria meningitidis serogroup C / serotype 2a (strain ATCC 700532 / DSM 15464 / FAM18).